The sequence spans 251 residues: MNIIRVPVLSTNYIWCLYNYKNECIIIDPGEATKVLDILKKFQFRLRAILLTHNHIDHVNGVAPLIQYFPKTIVYGPTETKNNGSHFLVSEGDDFVLLQKKFKVLNLPGHTPGHIGFYSAPWLFCGDTVFSAGCGKICIGFAQYMYESFLKIRYLPRNTLIFSGHEYTLSNVNFAISILPQDQSIINYRNKIIKLYKKKQPTVPTTLNLELKVNPFFRCGNSNIKKSLNLPCDLKEEWQVFSELRKKKDSF.

Zn(2+) is bound by residues His53, His55, Asp57, His58, His110, Asp127, and His165.

The protein belongs to the metallo-beta-lactamase superfamily. Glyoxalase II family. Monomer. Requires Zn(2+) as cofactor.

It catalyses the reaction an S-(2-hydroxyacyl)glutathione + H2O = a 2-hydroxy carboxylate + glutathione + H(+). The protein operates within secondary metabolite metabolism; methylglyoxal degradation; (R)-lactate from methylglyoxal: step 2/2. Its function is as follows. Thiolesterase that catalyzes the hydrolysis of S-D-lactoyl-glutathione to form glutathione and D-lactic acid. The polypeptide is Hydroxyacylglutathione hydrolase (Blochmanniella pennsylvanica (strain BPEN)).